A 976-amino-acid polypeptide reads, in one-letter code: Serine/threonine-protein kinase CLA4 (976 aa).

The interval 1–46 (MTSIYTSDLKNHRRAPPPPNGAAGSGSGSSSGSGSGSGSGSGSGSL) is disordered. Residues 23-43 (AGSGSGSSSGSGSGSGSGSGS) show a composition bias toward gly residues. Residues 73–184 (SKRQSGWVHV…WLDAFTTKCP (112 aa)) form the PH domain. A disordered region spans residues 207–231 (LTNGSLNGNSSSSPTSGLSSSSVLT). In terms of domain architecture, CRIB spans 237–250 (VSGPINFTHKVHVG). 2 disordered regions span residues 298-522 (GGNS…KIHP) and 559-658 (SKKS…QLKK). 2 stretches are compositionally biased toward low complexity: residues 313-332 (NSKT…AKNN) and 371-411 (LNGS…PLNN). Over residues 430–440 (SGTSSDTYSNK) the composition is skewed to polar residues. A compositionally biased stretch (basic and acidic residues) spans 441–455 (NHQDRSGYEQQRQQR). Residues 456–487 (TDSSQQQQQQQKQHQYQQKSQQQQQQPLSSHQ) are compositionally biased toward low complexity. Pro residues predominate over residues 496–505 (QVPPTLPSSG). Over residues 559–583 (SKKSQQQLASKQPSPPSSQQQQQKP) the composition is skewed to low complexity. The segment covering 622 to 635 (NETSGVSKTPSPTD) has biased composition (polar residues). Positions 685-940 (FRIVEKAGQG…TDELLEHSFI (256 aa)) constitute a Protein kinase domain. ATP-binding positions include 691-699 (AGQGASGNV) and Lys-715. The Proton acceptor role is filled by Asp-808.

This sequence belongs to the protein kinase superfamily. STE Ser/Thr protein kinase family. STE20 subfamily. In terms of assembly, interacts (via the CRIB domain) with CDC42.

It catalyses the reaction L-seryl-[protein] + ATP = O-phospho-L-seryl-[protein] + ADP + H(+). The catalysed reaction is L-threonyl-[protein] + ATP = O-phospho-L-threonyl-[protein] + ADP + H(+). Ser/Thr kinase required for wild-type filamentous growth, chlamydospore formation, and virulence in mouse systemic infection. The chain is Serine/threonine-protein kinase CLA4 (CLA4) from Candida albicans (strain SC5314 / ATCC MYA-2876) (Yeast).